A 544-amino-acid polypeptide reads, in one-letter code: Formate--tetrahydrofolate ligase (544 aa).

63-70 (TPAGEGKS) is an ATP binding site.

It belongs to the formate--tetrahydrofolate ligase family.

It catalyses the reaction (6S)-5,6,7,8-tetrahydrofolate + formate + ATP = (6R)-10-formyltetrahydrofolate + ADP + phosphate. The protein operates within one-carbon metabolism; tetrahydrofolate interconversion. The polypeptide is Formate--tetrahydrofolate ligase (Fusobacterium nucleatum subsp. nucleatum (strain ATCC 25586 / DSM 15643 / BCRC 10681 / CIP 101130 / JCM 8532 / KCTC 2640 / LMG 13131 / VPI 4355)).